We begin with the raw amino-acid sequence, 86 residues long: U22-theraphotoxin-Cg1a (86 aa).

A signal peptide spans 1 to 20 (MKVSVVLAITVLALLSVAYA). The propeptide occupies 21–51 (SEFEEKELVKEVVRTIFLGKEDAALREETDR). Disulfide bonds link Cys53-Cys67, Cys60-Cys72, and Cys66-Cys79. A Phenylalanine amide modification is found at Phe85.

This sequence belongs to the neurotoxin 10 (Hwtx-1) family. 42 (Jztx-44) subfamily. As to expression, expressed by the venom gland.

It localises to the secreted. Probable ion channel inhibitor. The protein is U22-theraphotoxin-Cg1a of Chilobrachys guangxiensis (Chinese earth tiger tarantula).